A 387-amino-acid chain; its full sequence is Monomeric sarcosine oxidase (387 aa).

6–36 (DVIVVGAGSMGMAAGYYLAKQGVKTLLVDSF) lines the FAD pocket. The residue at position 316 (Cys316) is an S-8alpha-FAD cysteine.

It belongs to the MSOX/MTOX family. MSOX subfamily. In terms of assembly, monomer. The cofactor is FAD.

It localises to the cytoplasm. The catalysed reaction is sarcosine + O2 + H2O = formaldehyde + glycine + H2O2. Catalyzes the oxidative demethylation of sarcosine. The sequence is that of Monomeric sarcosine oxidase (soxA) from Bacillus sp. (strain NS-129).